Here is a 500-residue protein sequence, read N- to C-terminus: Taxoid 7-beta-hydroxylase (500 aa).

The helical transmembrane segment at 24–44 (PAILSTALTAIAGIIVLLVIT) threads the bilayer. Cys446 is a binding site for heme.

It belongs to the cytochrome P450 family.

The protein localises to the microsome membrane. The enzyme catalyses taxusin + reduced [NADPH--hemoprotein reductase] + O2 = 7beta-hydroxytaxusin + oxidized [NADPH--hemoprotein reductase] + H2O + H(+). The catalysed reaction is 2alpha-hydroxytaxusin + reduced [NADPH--hemoprotein reductase] + O2 = 2alpha,7beta-dihydroxytaxusin + oxidized [NADPH--hemoprotein reductase] + H2O + H(+). It catalyses the reaction 7beta-hydroxytaxusin + reduced [NADPH--hemoprotein reductase] + O2 = 2alpha,7beta-dihydroxytaxusin + oxidized [NADPH--hemoprotein reductase] + H2O + H(+). It functions in the pathway alkaloid biosynthesis; taxol biosynthesis. Functionally, catalyzes the conversion of taxusin to 7-beta-hydroxytaxusin in taxol biosynthesis. Catalyzes the conversion of 2-alpha-hydroxytaxusin to 2-alpha-7-beta-hydroxytaxusin in taxol biosynthesis. This chain is Taxoid 7-beta-hydroxylase, found in Taxus cuspidata (Japanese yew).